A 105-amino-acid chain; its full sequence is Co-chaperonin GroES (105 aa).

It belongs to the GroES chaperonin family. As to quaternary structure, heptamer of 7 subunits arranged in a ring. Interacts with the chaperonin GroEL.

It is found in the cytoplasm. Its function is as follows. Together with the chaperonin GroEL, plays an essential role in assisting protein folding. The GroEL-GroES system forms a nano-cage that allows encapsulation of the non-native substrate proteins and provides a physical environment optimized to promote and accelerate protein folding. GroES binds to the apical surface of the GroEL ring, thereby capping the opening of the GroEL channel. The polypeptide is Co-chaperonin GroES (Parvibaculum lavamentivorans (strain DS-1 / DSM 13023 / NCIMB 13966)).